The primary structure comprises 286 residues: tRNA (guanine-N(7)-)-methyltransferase (286 aa).

S-adenosyl-L-methionine-binding positions include Gly-103, 126 to 127 (EI), 161 to 162 (NA), and Cys-181. The active site involves Asp-184. 259 to 261 (TEE) provides a ligand contact to S-adenosyl-L-methionine.

This sequence belongs to the class I-like SAM-binding methyltransferase superfamily. TrmB family. As to quaternary structure, forms a complex with TRM82.

It is found in the nucleus. It catalyses the reaction guanosine(46) in tRNA + S-adenosyl-L-methionine = N(7)-methylguanosine(46) in tRNA + S-adenosyl-L-homocysteine. It functions in the pathway tRNA modification; N(7)-methylguanine-tRNA biosynthesis. In terms of biological role, catalyzes the formation of N(7)-methylguanine at position 46 (m7G46) in tRNA. The protein is tRNA (guanine-N(7)-)-methyltransferase of Vanderwaltozyma polyspora (strain ATCC 22028 / DSM 70294 / BCRC 21397 / CBS 2163 / NBRC 10782 / NRRL Y-8283 / UCD 57-17) (Kluyveromyces polysporus).